Reading from the N-terminus, the 337-residue chain is Ornithine carbamoyltransferase (337 aa).

Carbamoyl phosphate contacts are provided by residues 57–60 (STRT), glutamine 84, arginine 108, and 135–138 (HPTQ). Residues asparagine 167, aspartate 231, and 235–236 (SM) contribute to the L-ornithine site. Carbamoyl phosphate-binding positions include 272–273 (CL) and arginine 317.

The protein belongs to the aspartate/ornithine carbamoyltransferase superfamily. OTCase family.

The protein resides in the cytoplasm. The enzyme catalyses carbamoyl phosphate + L-ornithine = L-citrulline + phosphate + H(+). Its pathway is amino-acid degradation; L-arginine degradation via ADI pathway; carbamoyl phosphate from L-arginine: step 2/2. In terms of biological role, reversibly catalyzes the transfer of the carbamoyl group from carbamoyl phosphate (CP) to the N(epsilon) atom of ornithine (ORN) to produce L-citrulline. This is Ornithine carbamoyltransferase from Streptococcus equi subsp. equi (strain 4047).